The sequence spans 127 residues: Ribosome-binding factor A (127 aa).

The protein belongs to the RbfA family. As to quaternary structure, monomer. Binds 30S ribosomal subunits, but not 50S ribosomal subunits or 70S ribosomes.

Its subcellular location is the cytoplasm. Functionally, one of several proteins that assist in the late maturation steps of the functional core of the 30S ribosomal subunit. Associates with free 30S ribosomal subunits (but not with 30S subunits that are part of 70S ribosomes or polysomes). Required for efficient processing of 16S rRNA. May interact with the 5'-terminal helix region of 16S rRNA. The sequence is that of Ribosome-binding factor A from Stenotrophomonas maltophilia (strain R551-3).